Consider the following 1486-residue polypeptide: Chromosome partition protein MukB (1486 aa).

Residue 34 to 41 (GGNGAGKS) participates in ATP binding. Coiled coils occupy residues 326–418 (LEAD…QYNQ), 444–480 (LETFQAKELEATEKMLSLEQKMSMAQTAHSQFEQAYQ), and 509–603 (RHLA…RAPV). Residues 666 to 783 (PGGSEDQRLN…EVPLFGRAAR (118 aa)) are flexible hinge. 3 coiled-coil regions span residues 835–923 (EAEI…AKLE), 977–1115 (EMLS…TAKA), and 1209–1265 (VEAI…LQSV).

Belongs to the SMC family. MukB subfamily. In terms of assembly, homodimerization via its hinge domain. Binds to DNA via its C-terminal region. Interacts, and probably forms a ternary complex, with MukE and MukF via its C-terminal region. The complex formation is stimulated by calcium or magnesium. Interacts with tubulin-related protein FtsZ.

It is found in the cytoplasm. It localises to the nucleoid. In terms of biological role, plays a central role in chromosome condensation, segregation and cell cycle progression. Functions as a homodimer, which is essential for chromosome partition. Involved in negative DNA supercoiling in vivo, and by this means organize and compact chromosomes. May achieve or facilitate chromosome segregation by condensation DNA from both sides of a centrally located replisome during cell division. The sequence is that of Chromosome partition protein MukB from Escherichia coli O7:K1 (strain IAI39 / ExPEC).